A 216-amino-acid polypeptide reads, in one-letter code: Minor fimbrial subunit HifD (216 aa).

Residues 1–19 (MQKTPKKLTALCHQQSTAS) form the signal peptide. Residue Cys20 is the site of N-palmitoyl cysteine attachment. Cys20 carries S-diacylglycerol cysteine lipidation. Residues 159 to 180 (PINVDGSQANSEKAPDTGKEQN) form a disordered region.

Belongs to the fimbrial protein family.

Its subcellular location is the cell membrane. The protein localises to the fimbrium. Its function is as follows. May be a minor structural protein required for pilus biogenesis. This Haemophilus influenzae protein is Minor fimbrial subunit HifD (hifD).